A 30-amino-acid polypeptide reads, in one-letter code: Matrix Gla protein (30 aa).

Residues serine 2, serine 3, and serine 5 each carry the phosphoserine modification.

This sequence belongs to the osteocalcin/matrix Gla protein family. Post-translationally, requires vitamin K-dependent gamma-carboxylation for its function.

The protein localises to the secreted. In terms of biological role, associates with the organic matrix of calcified cartilage. This chain is Matrix Gla protein (mgp), found in Prionace glauca (Blue shark).